The following is a 687-amino-acid chain: POZ-, AT hook-, and zinc finger-containing protein 1 (687 aa).

The BTB domain maps to 41-130; sequence CDVLLRVGDE…AYTSRIVVRL (90 aa). Residue K112 forms a Glycyl lysine isopeptide (Lys-Gly) (interchain with G-Cter in SUMO2) linkage. Residues 250–260 show a composition bias toward low complexity; sequence PFPSVASSAPP. The tract at residues 250–278 is disordered; sequence PFPSVASSAPPLTGKRGRGRPRKANLLDS. The segment at residues 264-276 is a DNA-binding region (a.T hook); sequence KRGRGRPRKANLL. A Glycyl lysine isopeptide (Lys-Gly) (interchain with G-Cter in SUMO2) cross-link involves residue K272. S282 carries the phosphoserine modification. The C2H2-type 1 zinc finger occupies 292–314; sequence LPCGLCGKVFTDANRLRQHEAQH. A disordered region spans residues 332–351; that stretch reads GENGLPISEDPDGPRKRSRT. C2H2-type zinc fingers lie at residues 355–377, 383–405, 413–436, 442–464, and 495–518; these read VACEICGKIFRDVYHLNRHKLSH, YSCPVCGLRFKRKDRMSYHVRSH, YICQSCGKGFSRPDHLNGHIKQVH, HKCQTCNASFATRDRLRSHLACH, and NFCSICNRGFSSASYLKVHVKTHH. Over residues 549–558 the composition is skewed to basic and acidic residues; sequence EGQKCSHQDP. Positions 549 to 603 are disordered; that stretch reads EGQKCSHQDPIESSDSYGDLSDASDLKTPEKQSANGSFSCDMAVPKNKMESDGEK. The C2H2-type 7 zinc-finger motif lies at 605-628; the sequence is YPCPECGSFFRSKSYLNKHIQKVH.

This sequence belongs to the krueppel C2H2-type zinc-finger protein family. In terms of assembly, homodimer. Interacts with RNF4. Interacts (via C-terminus) with TP53; this interaction inhibits TP53 ability to activate transcription. In terms of tissue distribution, ubiquitous.

It is found in the nucleus. Its function is as follows. Transcriptional regulator that plays a role in many biological processes such as embryogenesis, senescence, T-cell development or neurogenesis. Interacts with the TP53 protein to control genes that are important in proliferation and in the DNA-damage response. Mechanistically, the interaction inhibits the DNA binding and transcriptional activity of TP53/p53. Part of the transcriptional network modulating regulatory T-cell development and controls the generation of the regulatory T-cell pool under homeostatic conditions. Functionally, (Microbial infection) Plays a positive role in viral cDNA synthesis. This is POZ-, AT hook-, and zinc finger-containing protein 1 (PATZ1) from Homo sapiens (Human).